The primary structure comprises 371 residues: MLDISLIMLSAGESSRFNAPVKKQFLRLGEQPLWLYATKNLSSFYPFKQIVVTSGNISYMKKFAPEYKFVQGGATRAQSLLNALSMVESEYVLVSDVARVLISKNLFNNIIENHDKADCITPVLKVSDTTIYAQEAIDRDKIKLIQTPQLSRTSMLKKALEQSSNFTDDSTAIQAIGGKIWYVQGDELAKKITFKEDLKSLNLPKPSWDIFNGNGFDVHEFGEQRALLLGGVKVHENMGLKAHSDGDVLAHALIDALLGAAGLGDIGELFPDNDMQYKNADSMLLLQNAYTLVQNYGFELVNADITIIAQTPKMKEFKEAIAFNIAKTLKTTPNKINIKATTTEHLGFVGRKEGIAVLTSVNLKYFDWMKL.

Residues 1–210 are 2-C-methyl-D-erythritol 4-phosphate cytidylyltransferase; sequence MLDISLIMLS…LNLPKPSWDI (210 aa). The interval 211 to 371 is 2-C-methyl-D-erythritol 2,4-cyclodiphosphate synthase; the sequence is FNGNGFDVHE…NLKYFDWMKL (161 aa). A divalent metal cation-binding residues include Asp-217 and His-219. 4-CDP-2-C-methyl-D-erythritol 2-phosphate-binding positions include 217–219 and 243–244; these read DVH and HS. His-251 is an a divalent metal cation binding site. 4-CDP-2-C-methyl-D-erythritol 2-phosphate contacts are provided by residues 265–267, 270–274, 341–344, Phe-348, and Arg-351; these read DIG, FPDND, and TTTE.

This sequence in the N-terminal section; belongs to the IspD/TarI cytidylyltransferase family. IspD subfamily. In the C-terminal section; belongs to the IspF family. The cofactor is a divalent metal cation.

The catalysed reaction is 2-C-methyl-D-erythritol 4-phosphate + CTP + H(+) = 4-CDP-2-C-methyl-D-erythritol + diphosphate. It catalyses the reaction 4-CDP-2-C-methyl-D-erythritol 2-phosphate = 2-C-methyl-D-erythritol 2,4-cyclic diphosphate + CMP. Its pathway is isoprenoid biosynthesis; isopentenyl diphosphate biosynthesis via DXP pathway; isopentenyl diphosphate from 1-deoxy-D-xylulose 5-phosphate: step 2/6. It functions in the pathway isoprenoid biosynthesis; isopentenyl diphosphate biosynthesis via DXP pathway; isopentenyl diphosphate from 1-deoxy-D-xylulose 5-phosphate: step 4/6. Bifunctional enzyme that catalyzes the formation of 4-diphosphocytidyl-2-C-methyl-D-erythritol from CTP and 2-C-methyl-D-erythritol 4-phosphate (MEP) (IspD), and catalyzes the conversion of 4-diphosphocytidyl-2-C-methyl-D-erythritol 2-phosphate (CDP-ME2P) to 2-C-methyl-D-erythritol 2,4-cyclodiphosphate (ME-CPP) with a corresponding release of cytidine 5-monophosphate (CMP) (IspF). The chain is Bifunctional enzyme IspD/IspF from Campylobacter lari (strain RM2100 / D67 / ATCC BAA-1060).